We begin with the raw amino-acid sequence, 90 residues long: Small ribosomal subunit protein uS17 (90 aa).

The protein belongs to the universal ribosomal protein uS17 family. Part of the 30S ribosomal subunit.

In terms of biological role, one of the primary rRNA binding proteins, it binds specifically to the 5'-end of 16S ribosomal RNA. The protein is Small ribosomal subunit protein uS17 of Treponema denticola (strain ATCC 35405 / DSM 14222 / CIP 103919 / JCM 8153 / KCTC 15104).